The following is a 531-amino-acid chain: HERV-H LTR-associating protein 1 (531 aa).

Positions 1–29 (MLGFLSRGPSMKLCMGLACVLSLWNTVSG) are cleaved as a signal peptide. 3 N-linked (GlcNAc...) asparagine glycosylation sites follow: Asn79, Asn143, and Asn161. 2 disordered regions span residues 231–289 (GTAR…RPPE) and 340–362 (EKKP…GTEE). 2 stretches are compositionally biased toward polar residues: residues 232-269 (TART…SSPW) and 349-362 (ETRS…GTEE).

The protein localises to the secreted. In Homo sapiens (Human), this protein is HERV-H LTR-associating protein 1 (HHLA1).